The sequence spans 523 residues: Dynein regulatory complex subunit 3 (523 aa).

LRR repeat units lie at residues 44–65 (DVLS…WQFE), 66–87 (NLRK…ENLA), 88–109 (HLVW…DTLV), 110–131 (NLED…DALV), and 132–153 (KLQV…IYLR). The 39-residue stretch at 166–204 (NPISEAEDYKMFICAYLPDLMYLDYRRIDDHTKKLAEAK) folds into the LRRCT domain. 2 coiled-coil regions span residues 208 to 242 (SIDE…AFVE) and 366 to 391 (MTLE…VDMV).

It belongs to the DRC3 family. Component of the nexin-dynein regulatory complex (N-DRC). Interacts with DRC1. Interacts with TCTE1/DRC5. Interacts with DRC7.

Its subcellular location is the cytoplasm. The protein localises to the cytoskeleton. The protein resides in the cilium axoneme. It localises to the cell projection. It is found in the cilium. Its subcellular location is the flagellum axoneme. The protein localises to the flagellum. Functionally, component of the nexin-dynein regulatory complex (N-DRC) a key regulator of ciliary/flagellar motility which maintains the alignment and integrity of the distal axoneme and regulates microtubule sliding in motile axonemes. The sequence is that of Dynein regulatory complex subunit 3 (DRC3) from Homo sapiens (Human).